The following is a 448-amino-acid chain: Histidinol dehydrogenase (448 aa).

NAD(+) is bound by residues Tyr136, Gln197, and Asn220. Residues Ser243, Gln265, and His268 each contribute to the substrate site. Gln265 and His268 together coordinate Zn(2+). Catalysis depends on proton acceptor residues Glu333 and His334. Substrate-binding residues include His334, Asp367, Glu421, and His426. Position 367 (Asp367) interacts with Zn(2+). Zn(2+) is bound at residue His426.

This sequence belongs to the histidinol dehydrogenase family. It depends on Zn(2+) as a cofactor.

The enzyme catalyses L-histidinol + 2 NAD(+) + H2O = L-histidine + 2 NADH + 3 H(+). The protein operates within amino-acid biosynthesis; L-histidine biosynthesis; L-histidine from 5-phospho-alpha-D-ribose 1-diphosphate: step 9/9. Its function is as follows. Catalyzes the sequential NAD-dependent oxidations of L-histidinol to L-histidinaldehyde and then to L-histidine. The sequence is that of Histidinol dehydrogenase from Pseudomonas syringae pv. tomato (strain ATCC BAA-871 / DC3000).